Consider the following 394-residue polypeptide: Protein TsgA homolog (394 aa).

A run of 12 helical transmembrane segments spans residues 11 to 31 (WISFFSYALTGALVIVTGMVM), 51 to 71 (FLNAGILISIFLNAWLMEIVP), 78 to 98 (FGFVLMVAAVAGLMVSHSIAL), 101 to 121 (VSMFVLGLVSGITMSIGTFLI), 134 to 154 (LLFTDSFFSMAGMIFPMVAAV), 162 to 182 (WYWVYACIGLVYVAIFVLTFG), 206 to 226 (IGVLFLSVAALCYILGQLGFI), 250 to 270 (FWMSYMFGMWAFSFILRFFDL), 273 to 293 (ILTVLAGLATVLMYLFINGAP), 297 to 317 (AWFILTLGFFSSAIYTSIITL), 332 to 352 (FVLTCGTIGTMLTFVVTGPIV), and 361 to 381 (LQTANGLYAVVFVMCLILGFV).

Belongs to the major facilitator superfamily. TsgA family.

The protein localises to the cell inner membrane. The protein is Protein TsgA homolog of Enterobacter sp. (strain 638).